A 444-amino-acid chain; its full sequence is MSQSYINVIGAGLAGSEAAYQIAKRGIPVKLYEMRGVKSTPQHKTADFAELVCSNSLRGDALTNAVGLLKEEMRRLDSVILKSAEATRVPAGGALAVDREGFSQMVTELVTNHPLIEVIREEITEIPNDDITVIATGPLTSDALAEKIHALNGGNGFYFYDAAAPIIDVNTIDMTKIYLKSRYDKGEAAYLNAPMTKQEFMDFHDALVNAEEAPLNSFEKEKYFEGCMPIEVMAKRGIKTMLYGPMKPVGLEYPDDYQGPRDGEYKTPYAVVQLRQDNAAGSLYNIVGFQTHLKWGEQKRVFQMIPGLENAEFVRYGVMHRNSYMDSPNLLEQTFRSKKQPNLFFAGQMTGVEGYVESAASGLVAGINAARLFKGEEALVFPETTAIGSLPHYVTHADSKHFQPMNVNFGIIKELDGPRIRDKKERYEKIAERALQDLAPYLDK.

10 to 15 (GAGLAG) is a binding site for FAD.

It belongs to the MnmG family. TrmFO subfamily. Requires FAD as cofactor.

It localises to the cytoplasm. The catalysed reaction is uridine(54) in tRNA + (6R)-5,10-methylene-5,6,7,8-tetrahydrofolate + NADH + H(+) = 5-methyluridine(54) in tRNA + (6S)-5,6,7,8-tetrahydrofolate + NAD(+). It catalyses the reaction uridine(54) in tRNA + (6R)-5,10-methylene-5,6,7,8-tetrahydrofolate + NADPH + H(+) = 5-methyluridine(54) in tRNA + (6S)-5,6,7,8-tetrahydrofolate + NADP(+). Functionally, catalyzes the folate-dependent formation of 5-methyl-uridine at position 54 (M-5-U54) in all tRNAs. The sequence is that of Methylenetetrahydrofolate--tRNA-(uracil-5-)-methyltransferase TrmFO from Streptococcus gordonii (strain Challis / ATCC 35105 / BCRC 15272 / CH1 / DL1 / V288).